Reading from the N-terminus, the 67-residue chain is MEEWDVPQMKKEVESLKYQLAFQREMASKTIPELLKWIEDGIPKDPFLNPDLMKNNPWVEKGKCTIL.

At C64 the chain carries Cysteine methyl ester. The S-farnesyl cysteine moiety is linked to residue C64. Residues 65 to 67 (TIL) constitute a propeptide, removed in mature form.

The protein belongs to the G protein gamma family. As to quaternary structure, g proteins are composed of 3 units, alpha, beta and gamma.

It is found in the cell membrane. Functionally, guanine nucleotide-binding proteins (G proteins) are involved as a modulator or transducer in various transmembrane signaling systems. The beta and gamma chains are required for the GTPase activity, for replacement of GDP by GTP, and for G protein-effector interaction. In Homo sapiens (Human), this protein is Guanine nucleotide-binding protein G(I)/G(S)/G(O) subunit gamma-13 (GNG13).